The chain runs to 229 residues: Clathrin light chain B (229 aa).

2 stretches are compositionally biased toward low complexity: residues 1–17 (MAED…GAPE) and 45–58 (GAPA…AQPG). A disordered region spans residues 1 to 80 (MAEDFGFFSS…TVNGDVFQEA (80 aa)). Ser-11 and Ser-13 each carry phosphoserine. An involved in binding clathrin heavy chain region spans residues 93–155 (ADRLTQEPES…QVEKNKINNR (63 aa)). Thr-187 is subject to Phosphothreonine. Cys-199 and Cys-209 form a disulfide bridge. Lys-204 carries the post-translational modification N6-acetyllysine. Ser-217 is modified (phosphoserine).

The protein belongs to the clathrin light chain family. Clathrin coats are formed from molecules containing 3 heavy chains and 3 light chains. Interacts (via N-terminus) with HIP1. Interacts with HIP1R.

It is found in the cytoplasmic vesicle membrane. Its subcellular location is the membrane. It localises to the coated pit. Its function is as follows. Clathrin is the major protein of the polyhedral coat of coated pits and vesicles. The protein is Clathrin light chain B (Cltb) of Rattus norvegicus (Rat).